The chain runs to 503 residues: LEM domain-containing protein 2 (503 aa).

At alanine 2 the chain carries N-acetylalanine. One can recognise an LEM domain in the interval 2–42; it reads AGLSDLELRRELQALGFQPGPITDTTRDVYRNKLRRLRGEA. The span at 42-74 shows a compositional bias: basic and acidic residues; the sequence is ARLRDEERLREEARPRGEERLREEARLREDAPL. Disordered stretches follow at residues 42-97 and 127-157; these read ARLR…SGSA and AQLR…GPGL. The tract at residues 74 to 130 is required for nuclear retention and interaction with LMNA isoform C; it reads LRARPAAASPRAEPWLSQPASGSAYATPGAYGDIRPSAASWVGSRGLAYPARPAQLR. Over residues 75-87 the composition is skewed to low complexity; sequence RARPAAASPRAEP. Residues serine 166 and serine 175 each carry the phosphoserine modification. The segment at 172–198 is disordered; that stretch reads LPSSLLGPDPRPGLRATRAGPAGAARA. The segment covering 184-197 has biased composition (low complexity); it reads GLRATRAGPAGAAR. Transmembrane regions (helical) follow at residues 213–233 and 377–397; these read LLLW…WVKM and VTNV…LILL. The segment at 395 to 503 is winged-Helix (WH); it reads ILLKYRWRKL…KPSSFSDSER (109 aa). Phosphoserine is present on residues serine 497, serine 499, and serine 501.

In terms of assembly, interacts (via N-terminus) with LMNA isoform C (via C-terminus) (in vitro). Interacts (via LEM domain) with BANF1. Interacts (via C-terminus) with CHMP7. Interacts (via N-terminus) with tubulin; the interaction causes microtubule bundling and stabilization (in vitro). Post-translationally, phosphorylated; strongly phosphorylated in mitosis compared to G1/S. Ubiquitously expressed, including bone marrow, brain, kidney, colon, skeletal muscle, thymus, testis and uterus.

The protein resides in the nucleus inner membrane. The protein localises to the nucleus envelope. It is found in the cytoplasm. It localises to the cytoskeleton. Its subcellular location is the spindle. Functionally, nuclear lamina-associated inner nuclear membrane protein that is involved in nuclear structure organization, maintenance of nuclear envelope (NE) integrity and NE reformation after mitosis. Plays a role as transmembrane adapter for the endosomal sorting complexes required for transport (ESCRT), and is thereby involved in ESCRT-mediated NE reformation. Promotes ESCRT-mediated NE closure by recruiting CHMP7 and downstream ESCRT-III proteins IST1/CHMP8 and CHMP2A to the reforming NE during anaphase. During nuclear reassembly, condenses into a liquid-like coating around microtubule spindles and coassembles with CHMP7 to form a macromolecular O-ring seal at the confluence between membranes, chromatin, and the spindle to facilitate early nuclear sealing. Plays a role in the organization of heterochromatin associated with the NE and in the maintenance of NE organization under mechanical stress. Required for embryonic development and involved in regulation of several signaling pathways such as MAPK and AKT. Required for myoblast differentiation involving regulation of ERK signaling. Essential for cardiac homeostasis and proper heart function. This Homo sapiens (Human) protein is LEM domain-containing protein 2 (LEMD2).